Consider the following 392-residue polypeptide: Speckle-type POZ protein-like A (392 aa).

The MATH domain maps to 31 to 161 (KFSYMWTINN…DDKLTLFCEV (131 aa)). One can recognise a BTB domain in the interval 200–267 (TDCSLYVGGQ…IYTGKAPNLE (68 aa)).

The protein belongs to the Tdpoz family. As to quaternary structure, homodimer. Heterodimer with SPOP. Component of cullin-RING-based BCR (BTB-CUL3-RBX1) E3 ubiquitin-protein ligase complexes containing homodimeric SPOPL or the heterodimer formed by SPOP and SPOPL.

Its subcellular location is the nucleus. It participates in protein modification; protein ubiquitination. Functionally, component of a cullin-RING-based BCR (BTB-CUL3-RBX1) E3 ubiquitin-protein ligase complex that mediates the ubiquitination and subsequent proteasomal degradation of target proteins, but with relatively low efficiency. The sequence is that of Speckle-type POZ protein-like A (spopla) from Danio rerio (Zebrafish).